We begin with the raw amino-acid sequence, 138 residues long: Small ribosomal subunit protein uS12 (138 aa).

Residue Asp89 is modified to 3-methylthioaspartic acid. Residues 101–138 (ALDTAGTQNRNQGRSKYGTKRPKKGAATAAKGPVKGKK) form a disordered region. Positions 105-114 (AGTQNRNQGR) are enriched in polar residues. Over residues 125–138 (GAATAAKGPVKGKK) the composition is skewed to low complexity.

Belongs to the universal ribosomal protein uS12 family. As to quaternary structure, part of the 30S ribosomal subunit. Contacts proteins S8 and S17. May interact with IF1 in the 30S initiation complex.

In terms of biological role, with S4 and S5 plays an important role in translational accuracy. Interacts with and stabilizes bases of the 16S rRNA that are involved in tRNA selection in the A site and with the mRNA backbone. Located at the interface of the 30S and 50S subunits, it traverses the body of the 30S subunit contacting proteins on the other side and probably holding the rRNA structure together. The combined cluster of proteins S8, S12 and S17 appears to hold together the shoulder and platform of the 30S subunit. The chain is Small ribosomal subunit protein uS12 from Heliobacterium modesticaldum (strain ATCC 51547 / Ice1).